The following is a 232-amino-acid chain: MSKLGKFFKGSRSSRARAAPSAQEALARLREIEEMMAKKQEYLENRIQRELALAKKHGSQNKRAALQALKRKKRFEKQLTQIDGTLSTIEFQREALENSHTNTEVLRNMGFAAKAMKAVHENMDLNKIDDLMQDITEQQDIAQEISEAFSQRVQFADGFDEDELLAELEELEQEELNKKMTSMELPNVPSSSLPAQPSRKAGVPSSVHRSRAASSRRAEEDDDFKQLAAWAT.

2 disordered regions span residues M1–Q23 and E172–T232. The tract at residues M1–V153 is intramolecular interaction with C-terminus. Low complexity predominate over residues S11 to Q23. Coiled-coil stretches lie at residues S21–E50 and L125–S182. Residues Q154–T232 form an intramolecular interaction with N-terminus region. S210 carries the phosphoserine; by AURKB modification.

It belongs to the SNF7 family. In terms of assembly, probable core component of the endosomal sorting required for transport complex III (ESCRT-III). ESCRT-III components are thought to multimerize to form a flat lattice on the perimeter membrane of the endosome. Several assembly forms of ESCRT-III may exist that interact and act sequentially. Self-associates. Interacts with CHMP2A. Interacts with CHMP4A. Interacts with CHMP4B. Interacts with CHMP6. Interacts with VPS4A. Interacts with PDCD6IP; the interaction is direct. Phosphorylated at Ser-210 by AURKB during cytokinesis: together with ZFYVE19/ANCHR, phosphorylated CHMP4C retains abscission-competent VPS4 (VPS4A and/or VPS4B) at the midbody ring until abscission checkpoint signaling is terminated at late cytokinesis.

The protein resides in the cytoplasm. Its subcellular location is the cytosol. It is found in the late endosome membrane. The protein localises to the midbody. It localises to the midbody ring. Functionally, probable core component of the endosomal sorting required for transport complex III (ESCRT-III) which is involved in multivesicular bodies (MVBs) formation and sorting of endosomal cargo proteins into MVBs. MVBs contain intraluminal vesicles (ILVs) that are generated by invagination and scission from the limiting membrane of the endosome and mostly are delivered to lysosomes enabling degradation of membrane proteins, such as stimulated growth factor receptors, lysosomal enzymes and lipids. The MVB pathway appears to require the sequential function of ESCRT-O, -I,-II and -III complexes. ESCRT-III proteins mostly dissociate from the invaginating membrane before the ILV is released. The ESCRT machinery also functions in topologically equivalent membrane fission events, such as the terminal stages of cytokinesis. Key component of the cytokinesis checkpoint, a process required to delay abscission to prevent both premature resolution of intercellular chromosome bridges and accumulation of DNA damage: upon phosphorylation by AURKB, together with ZFYVE19/ANCHR, retains abscission-competent VPS4 (VPS4A and/or VPS4B) at the midbody ring until abscission checkpoint signaling is terminated at late cytokinesis. Deactivation of AURKB results in dephosphorylation of CHMP4C followed by its dissociation from ANCHR and VPS4 and subsequent abscission. ESCRT-III proteins are believed to mediate the necessary vesicle extrusion and/or membrane fission activities, possibly in conjunction with the AAA ATPase VPS4. CHMP4A/B/C are required for the exosomal release of SDCBP, CD63 and syndecan. This chain is Charged multivesicular body protein 4c (Chmp4c), found in Rattus norvegicus (Rat).